A 194-amino-acid polypeptide reads, in one-letter code: Probable nicotinate-nucleotide adenylyltransferase (194 aa).

Belongs to the NadD family.

The catalysed reaction is nicotinate beta-D-ribonucleotide + ATP + H(+) = deamido-NAD(+) + diphosphate. It participates in cofactor biosynthesis; NAD(+) biosynthesis; deamido-NAD(+) from nicotinate D-ribonucleotide: step 1/1. In terms of biological role, catalyzes the reversible adenylation of nicotinate mononucleotide (NaMN) to nicotinic acid adenine dinucleotide (NaAD). In Brucella suis biovar 1 (strain 1330), this protein is Probable nicotinate-nucleotide adenylyltransferase.